The primary structure comprises 820 residues: Sucrose synthase 2 (820 aa).

The tract at residues methionine 276–threonine 753 is GT-B glycosyltransferase.

Belongs to the glycosyltransferase 1 family. Plant sucrose synthase subfamily.

It carries out the reaction an NDP-alpha-D-glucose + D-fructose = a ribonucleoside 5'-diphosphate + sucrose + H(+). In terms of biological role, sucrose-cleaving enzyme that provides UDP-glucose and fructose for various metabolic pathways. The chain is Sucrose synthase 2 from Tulipa gesneriana (Garden tulip).